Here is a 508-residue protein sequence, read N- to C-terminus: Serine carboxypeptidase 3 (508 aa).

Residues 1–19 form the signal peptide; it reads MVTTPRLVSLLLLLALCAA. Residues 20-80 constitute a propeptide that is removed on maturation; the sequence is AAGALRLPPD…PGQLLERRVT (61 aa). The interval 48 to 67 is disordered; it reads PKDSSSSSGRHGARVGEGNE. Leu81 carries the post-translational modification Blocked amino end (Leu). Disulfide bonds link Cys133/Cys373, Cys301/Cys316, and Cys339/Cys344. Asn151 is a glycosylation site (N-linked (GlcNAc...) asparagine). The active site involves Ser223. Asp411 is an active-site residue. Cys414 contributes to the substrate binding site. The active site involves His468. Positions 492-508 are excised as a propeptide; it reads EAVPEEESSTTSFYAAM.

It belongs to the peptidase S10 family. Monomer.

It localises to the secreted. It catalyses the reaction Release of a C-terminal amino acid with broad specificity.. Inhibited by mercuric ions. The sequence is that of Serine carboxypeptidase 3 (CBP3) from Hordeum vulgare (Barley).